The chain runs to 122 residues: Large ribosomal subunit protein uL14c (122 aa).

This sequence belongs to the universal ribosomal protein uL14 family. Part of the 50S ribosomal subunit.

The protein resides in the plastid. Its subcellular location is the chloroplast. In terms of biological role, binds to 23S rRNA. The protein is Large ribosomal subunit protein uL14c of Capsella bursa-pastoris (Shepherd's purse).